Reading from the N-terminus, the 255-residue chain is Taurine import ATP-binding protein TauB (255 aa).

Residues 2 to 229 enclose the ABC transporter domain; sequence LQISHLYADY…RFVAGESSRS (228 aa). 34 to 41 lines the ATP pocket; the sequence is GPSGCGKT.

It belongs to the ABC transporter superfamily. Taurine importer (TC 3.A.1.17.1) family. In terms of assembly, the complex is composed of two ATP-binding proteins (TauB), two transmembrane proteins (TauC) and a solute-binding protein (TauA).

It localises to the cell inner membrane. It catalyses the reaction taurine(out) + ATP + H2O = taurine(in) + ADP + phosphate + H(+). Part of the ABC transporter complex TauABC involved in taurine import. Responsible for energy coupling to the transport system. This Escherichia coli O157:H7 protein is Taurine import ATP-binding protein TauB.